We begin with the raw amino-acid sequence, 216 residues long: Dimethylamine corrinoid protein 2 (216 aa).

The B12-binding N-terminal domain occupies 1 to 91; the sequence is MASKEELLQE…EMPAGTETKK (91 aa). The region spanning 92 to 216 is the B12-binding domain; the sequence is LGVIVNGTVE…AKAKELLLGK (125 aa). H105 serves as a coordination point for methylcob(III)alamin.

The protein belongs to the methylamine corrinoid protein family.

The protein operates within one-carbon metabolism; methanogenesis from dimethylamine. Acts as a methyl group carrier between MtbB and MtbA. This chain is Dimethylamine corrinoid protein 2 (mtbC2), found in Methanosarcina acetivorans (strain ATCC 35395 / DSM 2834 / JCM 12185 / C2A).